A 420-amino-acid chain; its full sequence is Serine hydroxymethyltransferase (420 aa).

Residues Leu121 and 125 to 127 each bind (6S)-5,6,7,8-tetrahydrofolate; that span reads GHL. An N6-(pyridoxal phosphate)lysine modification is found at Lys230. (6S)-5,6,7,8-tetrahydrofolate contacts are provided by residues Glu246 and 354-356; that span reads SPF.

Belongs to the SHMT family. As to quaternary structure, homodimer. Pyridoxal 5'-phosphate is required as a cofactor.

It is found in the cytoplasm. It catalyses the reaction (6R)-5,10-methylene-5,6,7,8-tetrahydrofolate + glycine + H2O = (6S)-5,6,7,8-tetrahydrofolate + L-serine. The protein operates within one-carbon metabolism; tetrahydrofolate interconversion. It functions in the pathway amino-acid biosynthesis; glycine biosynthesis; glycine from L-serine: step 1/1. In terms of biological role, catalyzes the reversible interconversion of serine and glycine with tetrahydrofolate (THF) serving as the one-carbon carrier. This reaction serves as the major source of one-carbon groups required for the biosynthesis of purines, thymidylate, methionine, and other important biomolecules. Also exhibits THF-independent aldolase activity toward beta-hydroxyamino acids, producing glycine and aldehydes, via a retro-aldol mechanism. This is Serine hydroxymethyltransferase from Rickettsia akari (strain Hartford).